The chain runs to 274 residues: NAD kinase (274 aa).

The active-site Proton acceptor is the aspartate 59. Residues 59–60 (DG), lysine 64, 128–129 (ND), aspartate 158, 169–174 (TAYALS), and alanine 193 contribute to the NAD(+) site.

Belongs to the NAD kinase family. A divalent metal cation is required as a cofactor.

The protein localises to the cytoplasm. It carries out the reaction NAD(+) + ATP = ADP + NADP(+) + H(+). Involved in the regulation of the intracellular balance of NAD and NADP, and is a key enzyme in the biosynthesis of NADP. Catalyzes specifically the phosphorylation on 2'-hydroxyl of the adenosine moiety of NAD to yield NADP. This chain is NAD kinase, found in Petrotoga mobilis (strain DSM 10674 / SJ95).